We begin with the raw amino-acid sequence, 172 residues long: Large ribosomal subunit protein uL10 (172 aa).

It belongs to the universal ribosomal protein uL10 family. Part of the ribosomal stalk of the 50S ribosomal subunit. The N-terminus interacts with L11 and the large rRNA to form the base of the stalk. The C-terminus forms an elongated spine to which L12 dimers bind in a sequential fashion forming a multimeric L10(L12)X complex.

Functionally, forms part of the ribosomal stalk, playing a central role in the interaction of the ribosome with GTP-bound translation factors. This Francisella tularensis subsp. mediasiatica (strain FSC147) protein is Large ribosomal subunit protein uL10.